A 301-amino-acid polypeptide reads, in one-letter code: uncharacterized protein (301 aa).

The N-terminal stretch at 1–21 (MKIKLILVLIVFLTIVNVNNS) is a signal peptide. N-linked (GlcNAc...) asparagine glycosylation is found at N19, N59, N102, and N180.

It is found in the secreted. This is an uncharacterized protein from Dictyostelium discoideum (Social amoeba).